The sequence spans 139 residues: MKEFDQLLSVESDAYISSKEQGIDDGKRLGYVEGYQLGFEKGIELGQEIGYYQSCVTVWNHLVSINNNNNNNNNNNKNNLKFSVRGIQNLEKLTKLLEDYHLDFNDENIMNTLSEIRLKFKLTSVQLGLQTKENDELSF.

This sequence belongs to the LTO1 family.

This is Protein LTO1 homolog from Dictyostelium discoideum (Social amoeba).